A 331-amino-acid polypeptide reads, in one-letter code: GTP 3',8-cyclase (331 aa).

The 231-residue stretch at 1–231 (MNAVDYLRIS…DGQVQGNGPA (231 aa)) folds into the Radical SAM core domain. Arginine 8 serves as a coordination point for GTP. Residues cysteine 15 and cysteine 19 each contribute to the [4Fe-4S] cluster site. Tyrosine 21 lines the S-adenosyl-L-methionine pocket. Cysteine 22 contacts [4Fe-4S] cluster. Arginine 60 provides a ligand contact to GTP. An S-adenosyl-L-methionine-binding site is contributed by glycine 64. GTP is bound at residue threonine 91. Serine 115 contacts S-adenosyl-L-methionine. Lysine 157 is a GTP binding site. Methionine 191 lines the S-adenosyl-L-methionine pocket. The [4Fe-4S] cluster site is built by cysteine 254 and cysteine 257. 259-261 (RMR) contacts GTP. Cysteine 271 contributes to the [4Fe-4S] cluster binding site.

The protein belongs to the radical SAM superfamily. MoaA family. Monomer and homodimer. [4Fe-4S] cluster serves as cofactor.

It catalyses the reaction GTP + AH2 + S-adenosyl-L-methionine = (8S)-3',8-cyclo-7,8-dihydroguanosine 5'-triphosphate + 5'-deoxyadenosine + L-methionine + A + H(+). Its pathway is cofactor biosynthesis; molybdopterin biosynthesis. In terms of biological role, catalyzes the cyclization of GTP to (8S)-3',8-cyclo-7,8-dihydroguanosine 5'-triphosphate. This Acaryochloris marina (strain MBIC 11017) protein is GTP 3',8-cyclase.